The primary structure comprises 280 residues: Acetylglutamate kinase (280 aa).

Residues 64–65 (GG), R86, and N177 each bind substrate.

The protein belongs to the acetylglutamate kinase family. ArgB subfamily.

Its subcellular location is the cytoplasm. It catalyses the reaction N-acetyl-L-glutamate + ATP = N-acetyl-L-glutamyl 5-phosphate + ADP. It functions in the pathway amino-acid biosynthesis; L-arginine biosynthesis; N(2)-acetyl-L-ornithine from L-glutamate: step 2/4. Catalyzes the ATP-dependent phosphorylation of N-acetyl-L-glutamate. The chain is Acetylglutamate kinase from Nautilia profundicola (strain ATCC BAA-1463 / DSM 18972 / AmH).